We begin with the raw amino-acid sequence, 116 residues long: Large ribosomal subunit protein eL18 (116 aa).

It belongs to the eukaryotic ribosomal protein eL18 family. In terms of assembly, part of the 50S ribosomal subunit. Interacts weakly with proteins L4 and L15. Has been cross-linked to L4.

Its function is as follows. Stabilizes the tertiary rRNA structure within the 23S rRNA domain (domain II) to which it binds. The protein is Large ribosomal subunit protein eL18 (rpl18e) of Haloarcula marismortui (strain ATCC 43049 / DSM 3752 / JCM 8966 / VKM B-1809) (Halobacterium marismortui).